We begin with the raw amino-acid sequence, 170 residues long: Probable phospholipid hydroperoxide glutathione peroxidase (170 aa).

The active site involves Cys44.

The protein belongs to the glutathione peroxidase family.

It localises to the cytoplasm. The catalysed reaction is a hydroperoxy polyunsaturated fatty acid + 2 glutathione = a hydroxy polyunsaturated fatty acid + glutathione disulfide + H2O. Protects cells and enzymes from oxidative damage, by catalyzing the reduction of hydrogen peroxide, lipid peroxides and organic hydroperoxide, by glutathione. The protein is Probable phospholipid hydroperoxide glutathione peroxidase (GPXMC1) of Mesembryanthemum crystallinum (Common ice plant).